The chain runs to 398 residues: GTP cyclohydrolase-2 (398 aa).

The interval 1-172 is unknown; it reads MNTPTHTHPH…TAAACASTTE (172 aa). The GTP cyclohydrolase II stretch occupies residues 173 to 398; that stretch reads YELVTRTPVP…VKPIAKTGHA (226 aa). Position 220–224 (220–224) interacts with GTP; that stretch reads RVHSS. Cysteine 225, cysteine 236, and cysteine 238 together coordinate Zn(2+). GTP-binding positions include glutamine 241, 263–265, and threonine 285; that span reads EGR. Catalysis depends on aspartate 297, which acts as the Proton acceptor. Arginine 299 acts as the Nucleophile in catalysis. GTP is bound by residues serine 320 and lysine 325. The disordered stretch occupies residues 375 to 398; it reads QRPQDPSETVDGETVKPIAKTGHA.

The protein in the C-terminal section; belongs to the GTP cyclohydrolase II family. Requires Zn(2+) as cofactor.

It catalyses the reaction GTP + 4 H2O = 2,5-diamino-6-hydroxy-4-(5-phosphoribosylamino)-pyrimidine + formate + 2 phosphate + 3 H(+). The protein operates within cofactor biosynthesis; riboflavin biosynthesis; 5-amino-6-(D-ribitylamino)uracil from GTP: step 1/4. Functionally, catalyzes the conversion of GTP to 2,5-diamino-6-ribosylamino-4(3H)-pyrimidinone 5'-phosphate (DARP), formate and pyrophosphate. This Xylella fastidiosa (strain Temecula1 / ATCC 700964) protein is GTP cyclohydrolase-2 (ribA).